We begin with the raw amino-acid sequence, 485 residues long: Cobyric acid synthase (485 aa).

A GATase cobBQ-type domain is found at 252 to 439 (KVRIAVPILP…VHGLFGDDRQ (188 aa)). Cys-334 (nucleophile) is an active-site residue. The active site involves His-431.

The protein belongs to the CobB/CobQ family. CobQ subfamily.

Its pathway is cofactor biosynthesis; adenosylcobalamin biosynthesis. In terms of biological role, catalyzes amidations at positions B, D, E, and G on adenosylcobyrinic A,C-diamide. NH(2) groups are provided by glutamine, and one molecule of ATP is hydrogenolyzed for each amidation. In Azorhizobium caulinodans (strain ATCC 43989 / DSM 5975 / JCM 20966 / LMG 6465 / NBRC 14845 / NCIMB 13405 / ORS 571), this protein is Cobyric acid synthase.